Consider the following 378-residue polypeptide: Protein RecA (378 aa).

79 to 86 (GPESSGKT) is a binding site for ATP.

This sequence belongs to the RecA family.

It localises to the cytoplasm. Its function is as follows. Can catalyze the hydrolysis of ATP in the presence of single-stranded DNA, the ATP-dependent uptake of single-stranded DNA by duplex DNA, and the ATP-dependent hybridization of homologous single-stranded DNAs. It interacts with LexA causing its activation and leading to its autocatalytic cleavage. The polypeptide is Protein RecA (Streptococcus equi subsp. zooepidemicus (strain MGCS10565)).